Consider the following 235-residue polypeptide: tRNA (guanine-N(1)-)-methyltransferase (235 aa).

Residues glycine 114 and isoleucine 134 to leucine 139 contribute to the S-adenosyl-L-methionine site.

It belongs to the RNA methyltransferase TrmD family. Homodimer.

Its subcellular location is the cytoplasm. It carries out the reaction guanosine(37) in tRNA + S-adenosyl-L-methionine = N(1)-methylguanosine(37) in tRNA + S-adenosyl-L-homocysteine + H(+). Its function is as follows. Specifically methylates guanosine-37 in various tRNAs. The protein is tRNA (guanine-N(1)-)-methyltransferase of Ehrlichia canis (strain Jake).